The following is a 258-amino-acid chain: Imidazole glycerol phosphate synthase subunit HisF (258 aa).

Active-site residues include Asp12 and Asp131.

It belongs to the HisA/HisF family. In terms of assembly, heterodimer of HisH and HisF.

It localises to the cytoplasm. The enzyme catalyses 5-[(5-phospho-1-deoxy-D-ribulos-1-ylimino)methylamino]-1-(5-phospho-beta-D-ribosyl)imidazole-4-carboxamide + L-glutamine = D-erythro-1-(imidazol-4-yl)glycerol 3-phosphate + 5-amino-1-(5-phospho-beta-D-ribosyl)imidazole-4-carboxamide + L-glutamate + H(+). The protein operates within amino-acid biosynthesis; L-histidine biosynthesis; L-histidine from 5-phospho-alpha-D-ribose 1-diphosphate: step 5/9. In terms of biological role, IGPS catalyzes the conversion of PRFAR and glutamine to IGP, AICAR and glutamate. The HisF subunit catalyzes the cyclization activity that produces IGP and AICAR from PRFAR using the ammonia provided by the HisH subunit. The chain is Imidazole glycerol phosphate synthase subunit HisF from Nocardioides sp. (strain ATCC BAA-499 / JS614).